Here is a 273-residue protein sequence, read N- to C-terminus: Tyrosinase (273 aa).

The Cu cation site is built by histidine 38, histidine 54, histidine 63, histidine 190, histidine 194, and histidine 216.

This sequence belongs to the tyrosinase family. Cu(2+) serves as cofactor.

The catalysed reaction is 2 L-dopa + O2 = 2 L-dopaquinone + 2 H2O. The enzyme catalyses L-tyrosine + O2 = L-dopaquinone + H2O. Functionally, this is a copper-containing oxidase that functions in the formation of pigments such as melanins and other polyphenolic compounds. This Streptomyces antibioticus protein is Tyrosinase (melC2).